Here is a 99-residue protein sequence, read N- to C-terminus: Large ribosomal subunit protein bL27 (99 aa).

The segment at 13–65 is disordered; that stretch reads AHHKGGGSTTNGRNSAGRRLGAKRADGQEVHAGSIIYRQRGTKIHPGKNVGRG.

The protein belongs to the bacterial ribosomal protein bL27 family.

This is Large ribosomal subunit protein bL27 from Lactobacillus delbrueckii subsp. bulgaricus (strain ATCC BAA-365 / Lb-18).